Reading from the N-terminus, the 233-residue chain is MPIFRLPREPAFPDPALAEPDGLLAVGGDLEPERLLTAYAEGIFPWFDAESPILWWSPDPRLLLDPAALHVPRSLQRTLRRGTYRVSADQAFERVIRRCAERDRPGQQGTWITAEMVEAYVRLHRLGLAHSFEAWDGDALAGGLYGVSLGAAFFGESMFADAPDASKVAFVRSVEWLRSAGVELVDCQVRTEHLVRFGAREVPRAEFLARLARALEQPTLRGRWQLEAAGPPS.

This sequence belongs to the L/F-transferase family.

The protein localises to the cytoplasm. It carries out the reaction N-terminal L-lysyl-[protein] + L-leucyl-tRNA(Leu) = N-terminal L-leucyl-L-lysyl-[protein] + tRNA(Leu) + H(+). The catalysed reaction is N-terminal L-arginyl-[protein] + L-leucyl-tRNA(Leu) = N-terminal L-leucyl-L-arginyl-[protein] + tRNA(Leu) + H(+). It catalyses the reaction L-phenylalanyl-tRNA(Phe) + an N-terminal L-alpha-aminoacyl-[protein] = an N-terminal L-phenylalanyl-L-alpha-aminoacyl-[protein] + tRNA(Phe). In terms of biological role, functions in the N-end rule pathway of protein degradation where it conjugates Leu, Phe and, less efficiently, Met from aminoacyl-tRNAs to the N-termini of proteins containing an N-terminal arginine or lysine. The polypeptide is Leucyl/phenylalanyl-tRNA--protein transferase (Anaeromyxobacter dehalogenans (strain 2CP-C)).